The chain runs to 245 residues: MILFPAIDLKDGQCVRLKLGDMDQATVYNPDPAAQARAFEEQGFEWLHVVDLNGAFAGETVNGAAVDAILKATGNPVQLGGGIRTLEHIENWLSHGLARVILGTVAVRDPALVIEACGKFPGRVAVGIDAKGGKVAVEGWAEASELGVIELAKKFEGAGVSAIIYTDIDRDGILTGINWDSTLELANAVSIPVIASGGLASMDDIRRLAAPDAAKLEGAISGRALYDGRIDPKEALALIRAARKA.

The Proton acceptor role is filled by D8. D129 (proton donor) is an active-site residue.

The protein belongs to the HisA/HisF family.

It localises to the cytoplasm. It carries out the reaction 1-(5-phospho-beta-D-ribosyl)-5-[(5-phospho-beta-D-ribosylamino)methylideneamino]imidazole-4-carboxamide = 5-[(5-phospho-1-deoxy-D-ribulos-1-ylimino)methylamino]-1-(5-phospho-beta-D-ribosyl)imidazole-4-carboxamide. Its pathway is amino-acid biosynthesis; L-histidine biosynthesis; L-histidine from 5-phospho-alpha-D-ribose 1-diphosphate: step 4/9. This Sinorhizobium fredii (strain NBRC 101917 / NGR234) protein is 1-(5-phosphoribosyl)-5-[(5-phosphoribosylamino)methylideneamino] imidazole-4-carboxamide isomerase.